A 145-amino-acid chain; its full sequence is U1 small nuclear ribonucleoprotein C (145 aa).

The Matrin-type zinc finger occupies 4–36 (YYCDYCDTYLTHDSPSVRKTHCTGRKHRDNVKF). Positions 67–91 (FAGGPGGAPPKPAGVSIPPPNMGAP) are disordered. Positions 73 to 91 (GAPPKPAGVSIPPPNMGAP) are enriched in pro residues.

It belongs to the U1 small nuclear ribonucleoprotein C family. In terms of assembly, U1 snRNP is composed of the 7 core Sm proteins B/B', D1, D2, D3, E, F and G that assemble in a heptameric protein ring on the Sm site of the small nuclear RNA to form the core snRNP, and at least 3 U1 snRNP-specific proteins U1-70K, U1-A and U1-C. U1-C interacts with U1 snRNA and the 5' splice-site region of the pre-mRNA.

The protein localises to the nucleus. Its function is as follows. Component of the spliceosomal U1 snRNP, which is essential for recognition of the pre-mRNA 5' splice-site and the subsequent assembly of the spliceosome. U1-C is directly involved in initial 5' splice-site recognition for both constitutive and regulated alternative splicing. The interaction with the 5' splice-site seems to precede base-pairing between the pre-mRNA and the U1 snRNA. Stimulates commitment or early (E) complex formation by stabilizing the base pairing of the 5' end of the U1 snRNA and the 5' splice-site region. Regulates alternative splicing of a distinct group of target genes. The protein is U1 small nuclear ribonucleoprotein C of Drosophila melanogaster (Fruit fly).